The chain runs to 396 residues: D-alanine--D-alanine ligase (396 aa).

Residues 141 to 347 form the ATP-grasp domain; that stretch reads KMLWQAAGLP…PQDLMAQLLS (207 aa). An ATP-binding site is contributed by 174-229; that stretch reads ETRLGYPLFVKPAQAGSSVGASAVQTRAPLIPAIEAAFQWDEVVLVERYVRAREIE. Residues Asp301, Glu314, and Asn316 each coordinate Mg(2+). The tract at residues 374 to 396 is disordered; sequence AAHDPDAQGDDWDQRDSNPLPTA.

Belongs to the D-alanine--D-alanine ligase family. The cofactor is Mg(2+). Mn(2+) serves as cofactor.

It is found in the cytoplasm. It catalyses the reaction 2 D-alanine + ATP = D-alanyl-D-alanine + ADP + phosphate + H(+). It participates in cell wall biogenesis; peptidoglycan biosynthesis. Cell wall formation. In Treponema pallidum (strain Nichols), this protein is D-alanine--D-alanine ligase.